The primary structure comprises 155 residues: MYCPFCHAEETKVVDSRLVADGAQVRRRRECLECHERFTTFETAELIMPLIIKRDGRREPFHIDNLRSGMLRALEKRPVSVDDLEKAIISITEEIRRRGEREIDSQVVGELVMKELFRLDHVAYVRFASVYKRFKDVSDFRQTIDQMKNEDKEKS.

Residues 3-34 (CPFCHAEETKVVDSRLVADGAQVRRRRECLEC) fold into a zinc finger. The region spanning 49–139 (PLIIKRDGRR…VYKRFKDVSD (91 aa)) is the ATP-cone domain.

It belongs to the NrdR family. The cofactor is Zn(2+).

Negatively regulates transcription of bacterial ribonucleotide reductase nrd genes and operons by binding to NrdR-boxes. The polypeptide is Transcriptional repressor NrdR (Legionella pneumophila (strain Paris)).